The primary structure comprises 1404 residues: DNA-directed RNA polymerase subunit beta' (1404 aa).

Residues Cys-60, Cys-62, Cys-75, and Cys-78 each contribute to the Zn(2+) site. Asp-449, Asp-451, and Asp-453 together coordinate Mg(2+). Zn(2+)-binding residues include Cys-778, Cys-852, Cys-859, and Cys-862. Positions Asp-1381–Glu-1404 are disordered. Residues Leu-1384–Glu-1404 show a composition bias toward acidic residues.

Belongs to the RNA polymerase beta' chain family. The RNAP catalytic core consists of 2 alpha, 1 beta, 1 beta' and 1 omega subunit. When a sigma factor is associated with the core the holoenzyme is formed, which can initiate transcription. Mg(2+) serves as cofactor. Zn(2+) is required as a cofactor.

It catalyses the reaction RNA(n) + a ribonucleoside 5'-triphosphate = RNA(n+1) + diphosphate. In terms of biological role, DNA-dependent RNA polymerase catalyzes the transcription of DNA into RNA using the four ribonucleoside triphosphates as substrates. This is DNA-directed RNA polymerase subunit beta' from Leptospira borgpetersenii serovar Hardjo-bovis (strain JB197).